The sequence spans 383 residues: Putative glutamate--cysteine ligase 2-1 (383 aa).

Belongs to the glutamate--cysteine ligase type 2 family. YbdK subfamily.

It catalyses the reaction L-cysteine + L-glutamate + ATP = gamma-L-glutamyl-L-cysteine + ADP + phosphate + H(+). Functionally, ATP-dependent carboxylate-amine ligase which exhibits weak glutamate--cysteine ligase activity. This chain is Putative glutamate--cysteine ligase 2-1, found in Nocardia farcinica (strain IFM 10152).